A 485-amino-acid polypeptide reads, in one-letter code: GTPase Obg (485 aa).

The Obg domain maps to 1 to 159; it reads MKFVDEVRIF…LTLRLELKLL (159 aa). One can recognise an OBG-type G domain in the interval 160 to 332; sequence ADVGLLGFPN…LMDSVAEVLF (173 aa). GTP contacts are provided by residues 166 to 173, 191 to 195, 213 to 216, 284 to 287, and 313 to 315; these read GFPNAGKS, FTTLV, DIPG, NKLD, and SCA. Positions 173 and 193 each coordinate Mg(2+). 4 stretches are compositionally biased toward low complexity: residues 367–385, 394–428, 437–446, and 455–474; these read AGAA…AAKK, RKAG…PVKK, RKSGTAPAKK, and RKSG…ATKR. Residues 367-485 are disordered; sequence AGAAAATKSA…PARKSGGGRS (119 aa).

The protein belongs to the TRAFAC class OBG-HflX-like GTPase superfamily. OBG GTPase family. Monomer. The cofactor is Mg(2+).

It localises to the cytoplasm. An essential GTPase which binds GTP, GDP and possibly (p)ppGpp with moderate affinity, with high nucleotide exchange rates and a fairly low GTP hydrolysis rate. Plays a role in control of the cell cycle, stress response, ribosome biogenesis and in those bacteria that undergo differentiation, in morphogenesis control. The sequence is that of GTPase Obg from Myxococcus xanthus (strain DK1622).